The primary structure comprises 224 residues: Urease accessory protein UreG (224 aa).

Basic residues predominate over residues 1–20; sequence MATHSHPHSHTVPARPRRVR. The tract at residues 1–25 is disordered; sequence MATHSHPHSHTVPARPRRVRKPGEP. Residue 32–39 participates in GTP binding; the sequence is GPVGSGKT.

It belongs to the SIMIBI class G3E GTPase family. UreG subfamily. In terms of assembly, homodimer. UreD, UreF and UreG form a complex that acts as a GTP-hydrolysis-dependent molecular chaperone, activating the urease apoprotein by helping to assemble the nickel containing metallocenter of UreC. The UreE protein probably delivers the nickel.

Its subcellular location is the cytoplasm. Functionally, facilitates the functional incorporation of the urease nickel metallocenter. This process requires GTP hydrolysis, probably effectuated by UreG. The polypeptide is Urease accessory protein UreG (Mycobacterium bovis (strain ATCC BAA-935 / AF2122/97)).